A 279-amino-acid chain; its full sequence is Tryptophan 2,3-dioxygenase (279 aa).

Substrate is bound by residues 48-52 (FIVIH), Tyr-110, and Arg-114. Heme is bound at residue His-237. Residue Thr-251 coordinates substrate.

It belongs to the tryptophan 2,3-dioxygenase family. Homotetramer. It depends on heme as a cofactor.

It carries out the reaction L-tryptophan + O2 = N-formyl-L-kynurenine. It functions in the pathway amino-acid degradation; L-tryptophan degradation via kynurenine pathway; L-kynurenine from L-tryptophan: step 1/2. Heme-dependent dioxygenase that catalyzes the oxidative cleavage of the L-tryptophan (L-Trp) pyrrole ring and converts L-tryptophan to N-formyl-L-kynurenine. Catalyzes the oxidative cleavage of the indole moiety. This is Tryptophan 2,3-dioxygenase from Bacillus anthracis.